The following is a 460-amino-acid chain: tRNA modification GTPase MnmE (460 aa).

(6S)-5-formyl-5,6,7,8-tetrahydrofolate contacts are provided by arginine 29, glutamate 91, and lysine 132. The TrmE-type G domain occupies 227-383 (GISIALIGKT…LIDTIIKKCG (157 aa)). Asparagine 237 contacts K(+). Residues 237 to 242 (NVGKSS), 256 to 262 (TNIPGTT), and 281 to 284 (DTAG) contribute to the GTP site. Serine 241 is a binding site for Mg(2+). Positions 256, 258, and 261 each coordinate K(+). Threonine 262 is a binding site for Mg(2+). Lysine 460 provides a ligand contact to (6S)-5-formyl-5,6,7,8-tetrahydrofolate.

The protein belongs to the TRAFAC class TrmE-Era-EngA-EngB-Septin-like GTPase superfamily. TrmE GTPase family. As to quaternary structure, homodimer. Heterotetramer of two MnmE and two MnmG subunits. K(+) serves as cofactor.

It is found in the cytoplasm. Its function is as follows. Exhibits a very high intrinsic GTPase hydrolysis rate. Involved in the addition of a carboxymethylaminomethyl (cmnm) group at the wobble position (U34) of certain tRNAs, forming tRNA-cmnm(5)s(2)U34. The polypeptide is tRNA modification GTPase MnmE (Prochlorococcus marinus (strain MIT 9301)).